Here is a 400-residue protein sequence, read N- to C-terminus: Nicotinate phosphoribosyltransferase (400 aa).

H220 bears the Phosphohistidine; by autocatalysis mark.

Belongs to the NAPRTase family. Post-translationally, transiently phosphorylated on a His residue during the reaction cycle. Phosphorylation strongly increases the affinity for substrates and increases the rate of nicotinate D-ribonucleotide production. Dephosphorylation regenerates the low-affinity form of the enzyme, leading to product release.

It carries out the reaction nicotinate + 5-phospho-alpha-D-ribose 1-diphosphate + ATP + H2O = nicotinate beta-D-ribonucleotide + ADP + phosphate + diphosphate. It participates in cofactor biosynthesis; NAD(+) biosynthesis; nicotinate D-ribonucleotide from nicotinate: step 1/1. In terms of biological role, catalyzes the synthesis of beta-nicotinate D-ribonucleotide from nicotinate and 5-phospho-D-ribose 1-phosphate at the expense of ATP. The polypeptide is Nicotinate phosphoribosyltransferase (Shigella boydii serotype 18 (strain CDC 3083-94 / BS512)).